A 35-amino-acid chain; its full sequence is Natriuretic peptide TNPb (35 aa).

Cys-9 and Cys-25 are oxidised to a cystine.

In terms of tissue distribution, expressed by the venom gland.

The protein resides in the secreted. In terms of biological role, snake venom natriuretic peptide that exhibits vasoactive and probable hypotensive activity. Is only weakly active on natriuretic peptide receptor-C (NPR3). Stimulates cGMP production through the natriuretic peptide receptor 1 (NPR1) with moderate potencies for the rat NPR1 (EC(50)=1200 nM), and very weak potencies over human NPR1 (30% activation at 10 uM). In vivo, does not impact systolic and diastolic blood pressure, as well as heart rate, when intravenously injected in conscious rabbits. Does not affect the bradycardia due to cardiac afferent stimulation (Bezold-Jarisch reflex). This chain is Natriuretic peptide TNPb, found in Oxyuranus microlepidotus (Inland taipan).